The chain runs to 374 residues: Cobalt-precorrin-5B C(1)-methyltransferase (374 aa).

It belongs to the CbiD family.

It carries out the reaction Co-precorrin-5B + S-adenosyl-L-methionine = Co-precorrin-6A + S-adenosyl-L-homocysteine. It participates in cofactor biosynthesis; adenosylcobalamin biosynthesis; cob(II)yrinate a,c-diamide from sirohydrochlorin (anaerobic route): step 6/10. Functionally, catalyzes the methylation of C-1 in cobalt-precorrin-5B to form cobalt-precorrin-6A. The polypeptide is Cobalt-precorrin-5B C(1)-methyltransferase (Synechococcus elongatus (strain ATCC 33912 / PCC 7942 / FACHB-805) (Anacystis nidulans R2)).